The primary structure comprises 423 residues: Haloacid dehalogenase-like hydrolase domain-containing 5 (423 aa).

The first 23 residues, 1 to 23, serve as a signal peptide directing secretion; the sequence is MAAWGCVAALGAARGLCWRAARA.

This sequence belongs to the HAD-like hydrolase superfamily. In terms of tissue distribution, widely expressed.

The sequence is that of Haloacid dehalogenase-like hydrolase domain-containing 5 from Homo sapiens (Human).